A 640-amino-acid polypeptide reads, in one-letter code: Threonine--tRNA ligase (640 aa).

One can recognise a TGS domain in the interval 1 to 61 (MPTITLPDGS…ACDADVTIIT (61 aa)). The segment at 243–534 (DHRKIGKALD…LIEQYAGNMP (292 aa)) is catalytic. Zn(2+) is bound by residues cysteine 334, histidine 385, and histidine 511.

It belongs to the class-II aminoacyl-tRNA synthetase family. As to quaternary structure, homodimer. It depends on Zn(2+) as a cofactor.

Its subcellular location is the cytoplasm. It catalyses the reaction tRNA(Thr) + L-threonine + ATP = L-threonyl-tRNA(Thr) + AMP + diphosphate + H(+). Its function is as follows. Catalyzes the attachment of threonine to tRNA(Thr) in a two-step reaction: L-threonine is first activated by ATP to form Thr-AMP and then transferred to the acceptor end of tRNA(Thr). Also edits incorrectly charged L-seryl-tRNA(Thr). This chain is Threonine--tRNA ligase, found in Dichelobacter nodosus (strain VCS1703A).